A 252-amino-acid polypeptide reads, in one-letter code: Flagellar brake protein YcgR (252 aa).

The region spanning 118-236 is the PilZ domain; sequence QRREYFRVSI…EKGLQRAIFE (119 aa).

It belongs to the YcgR family. In terms of assembly, monomer. Interacts with the flagellar basal bodies.

The protein resides in the bacterial flagellum basal body. Its function is as follows. Acts as a flagellar brake, regulating swimming and swarming in a bis-(3'-5') cyclic diguanylic acid (c-di-GMP)-dependent manner. Binds 1 c-di-GMP dimer per subunit. Increasing levels of c-di-GMP lead to decreased motility. This is Flagellar brake protein YcgR from Yersinia pseudotuberculosis serotype I (strain IP32953).